The primary structure comprises 310 residues: Homoserine kinase (310 aa).

91–101 (PIGSGLGSSAC) lines the ATP pocket.

It belongs to the GHMP kinase family. Homoserine kinase subfamily.

The protein resides in the cytoplasm. It carries out the reaction L-homoserine + ATP = O-phospho-L-homoserine + ADP + H(+). The protein operates within amino-acid biosynthesis; L-threonine biosynthesis; L-threonine from L-aspartate: step 4/5. In terms of biological role, catalyzes the ATP-dependent phosphorylation of L-homoserine to L-homoserine phosphate. This is Homoserine kinase from Escherichia coli O157:H7.